Reading from the N-terminus, the 213-residue chain is tRNA (guanine-N(7)-)-methyltransferase (213 aa).

Residues glutamate 44, glutamate 69, aspartate 96, and aspartate 118 each contribute to the S-adenosyl-L-methionine site. Residue aspartate 118 is part of the active site. Residue lysine 122 participates in substrate binding. An interaction with RNA region spans residues arginine 124–arginine 129. Residues aspartate 154 and threonine 191–glutamate 194 contribute to the substrate site.

This sequence belongs to the class I-like SAM-binding methyltransferase superfamily. TrmB family. In terms of assembly, homodimer.

It catalyses the reaction guanosine(46) in tRNA + S-adenosyl-L-methionine = N(7)-methylguanosine(46) in tRNA + S-adenosyl-L-homocysteine. It participates in tRNA modification; N(7)-methylguanine-tRNA biosynthesis. In terms of biological role, catalyzes the formation of N(7)-methylguanine at position 46 (m7G46) in tRNA. In Bacillus subtilis (strain 168), this protein is tRNA (guanine-N(7)-)-methyltransferase.